A 695-amino-acid chain; its full sequence is NADPH--cytochrome P450 reductase (695 aa).

Over 1-8 the chain is Lumenal; the sequence is MAQLDTLD. The helical transmembrane segment at 9–31 threads the bilayer; it reads LVVLVVLLVGSAAYFTKGTYWAV. Residues 32–695 are Cytoplasmic-facing; it reads PKDPYAASGP…SGSYQEDVWS (664 aa). Residues 66 to 221 form the Flavodoxin-like domain; sequence CVIFYGSQTG…DFLAWKEPMW (156 aa). FMN is bound by residues 72-77, 123-126, 169-178, and aspartate 204; these read SQTGTA, ATYG, and LGNNTYEHYQ. Residues 277-538 form the FAD-binding FR-type domain; it reads HNPFIAPIVE…HVRHSNFKLP (262 aa). Arginine 296 contributes to the NADP(+) binding site. Residues 451–454, 469–471, and 486–489 each bind FAD; these read RYYS, TAV, and GVTT. Residues threonine 552, 614–615, 620–624, and glutamate 656 contribute to the NADP(+) site; these read SR and KVYVQ. An FAD-binding site is contributed by tryptophan 694.

This sequence belongs to the NADPH--cytochrome P450 reductase family. In the N-terminal section; belongs to the flavodoxin family. The protein in the C-terminal section; belongs to the flavoprotein pyridine nucleotide cytochrome reductase family. It depends on FAD as a cofactor. FMN serves as cofactor.

It localises to the endoplasmic reticulum membrane. Its subcellular location is the mitochondrion outer membrane. The protein localises to the cell membrane. It carries out the reaction 2 oxidized [cytochrome P450] + NADPH = 2 reduced [cytochrome P450] + NADP(+) + H(+). This enzyme is required for electron transfer from NADP to cytochrome P450 in microsomes. It can also provide electron transfer to heme oxygenase and cytochrome B5. Involved in ergosterol biosynthesis. The sequence is that of NADPH--cytochrome P450 reductase from Aspergillus terreus (strain NIH 2624 / FGSC A1156).